A 273-amino-acid chain; its full sequence is HLA class II histocompatibility antigen, DO beta chain (273 aa).

The signal sequence occupies residues 1 to 26 (MGSGWVPWVVALLVNLTRLDSSMTQG). Residues 27–120 (TDSPEDFVIQ…LGAPFTVGRK (94 aa)) form a beta-1 region. The Extracellular segment spans residues 27–224 (TDSPEDFVIQ…RAQSEYSWRK (198 aa)). Cystine bridges form between C41-C105 and C143-C199. An N-linked (GlcNAc...) asparagine glycan is attached at N45. The segment at 121–214 (VQPEVTVYPE…SLLSPVSVEW (94 aa)) is beta-2. Positions 123 to 213 (PEVTVYPERT…SSLLSPVSVE (91 aa)) constitute an Ig-like C1-type domain. A connecting peptide region spans residues 215–224 (RAQSEYSWRK). A helical transmembrane segment spans residues 225-245 (MLSGIAAFLLGLIFLLVGIVI). Residues 246–273 (QLRAQKGYVRTQMSGNEVSRAVLLPQSC) lie on the Cytoplasmic side of the membrane.

It belongs to the MHC class II family. In terms of assembly, heterodimer of an alpha chain (DOA) and a beta chain (DOB). Forms a heterotetrameric complex with an HLA-DM molecule during intracellular transport in endosomal/lysosomal compartments in B-cells.

The protein resides in the endosome membrane. It is found in the lysosome membrane. Its function is as follows. Important modulator in the HLA class II restricted antigen presentation pathway by interaction with the HLA-DM molecule in B-cells. Modifies peptide exchange activity of HLA-DM. This is HLA class II histocompatibility antigen, DO beta chain (HLA-DOB) from Homo sapiens (Human).